The primary structure comprises 45 residues: Thymosin beta-15A homolog (45 aa).

Residues 19 to 45 (KKTNTEEKNTLPSKETIEQEKECVKSS) are disordered. A compositionally biased stretch (basic and acidic residues) spans 21 to 45 (TNTEEKNTLPSKETIEQEKECVKSS).

It belongs to the thymosin beta family.

Its subcellular location is the cytoplasm. The protein localises to the cytoskeleton. Functionally, plays an important role in the organization of the cytoskeleton. Binds to and sequesters actin monomers (G actin) and therefore inhibits actin polymerization. In Coturnix japonica (Japanese quail), this protein is Thymosin beta-15A homolog.